We begin with the raw amino-acid sequence, 335 residues long: Putative zinc metalloprotease CPE1693 (335 aa).

Residue His17 coordinates Zn(2+). Glu18 is an active-site residue. A Zn(2+)-binding site is contributed by His21. Transmembrane regions (helical) follow at residues 88–110, 262–284, and 312–334; these read ILVM…IGLA, LLWF…FPAL, and TVGF…IFPI. The PDZ domain maps to 96 to 174; that stretch reads FMNYVLALII…PVELEIKRGN (79 aa).

This sequence belongs to the peptidase M50B family. Zn(2+) serves as cofactor.

Its subcellular location is the cell membrane. The protein is Putative zinc metalloprotease CPE1693 of Clostridium perfringens (strain 13 / Type A).